Consider the following 1315-residue polypeptide: Activating molecule in BECN1-regulated autophagy protein 1A (1315 aa).

WD repeat units lie at residues 50–89, 92–132, and 134–174; these read DSPRSTFLLAFSPDRSLMASTHVNHNIYITEVKSGKCVHS, GHRR…ESWL, and ESNS…TVVK. Disordered regions lie at residues 294 to 322, 342 to 409, 426 to 463, 502 to 526, 545 to 610, 630 to 660, 681 to 736, 985 to 1134, 1181 to 1208, and 1286 to 1315; these read RVPSPPDEDPSDSASLEAQAHTFSSARTE, FSSV…QRTG, FQSPVYTSASDRWGSTPGTSSSRHRPPEEEGQSSSSSI, NNNMDPEQPGPSHYQSPYSGENPPH, SRRW…DTGQ, VYRQSASSRSANISQGALNQEMPEDTPDNDY, RDSV…PRNA, HSDG…STGQ, GSQTGADAQNRTRLSPIPGPSSGAPESL, and LLSSSPSLSPVNNSNYSNSDSSYLGDEYGR. Polar residues predominate over residues 351–360; it reads NMRNHSSSSG. Positions 378 to 388 are enriched in basic and acidic residues; the sequence is PGREGGGRHPG. Composition is skewed to polar residues over residues 394 to 409 and 426 to 435; these read SGLNGQSSSMTPQRTG and FQSPVYTSAS. 2 stretches are compositionally biased toward polar residues: residues 552-581 and 633-647; these read GQPSSTERNTPWQPSSSAFHSVAPVSQSNE and QSASSRSANISQGAL. The span at 696–715 shows a compositional bias: low complexity; the sequence is RPLSSNPSSLSPSPVPNAES. Residues 716-725 show a composition bias toward acidic residues; it reads SEVDFEEFEE. The span at 1009–1021 shows a compositional bias: low complexity; it reads PSSSRSGDRAGSS. Residues 1022 to 1031 show a composition bias toward basic and acidic residues; the sequence is RTDRRSRRDI. Residues 1047–1060 are compositionally biased toward polar residues; sequence SVTSQGTQTQNQRL. Short sequence motifs (TQT motif) lie at residues 1053–1055 and 1065–1067; these read TQT. Basic and acidic residues predominate over residues 1061-1072; that stretch reads QHAETQTDRDLP. A compositionally biased stretch (polar residues) spans 1076-1090; sequence QQPSTSQGSQVTDAT. Acidic residues predominate over residues 1091–1103; it reads ESLDFETLPEDSG. Composition is skewed to polar residues over residues 1125 to 1134 and 1181 to 1193; these read SEPSTDSTGQ and GSQTGADAQNRTR. Over residues 1286–1307 the composition is skewed to low complexity; that stretch reads LLSSSPSLSPVNNSNYSNSDSS.

Belongs to the WD repeat AMBRA1 family. In terms of assembly, component of the DCX(AMBRA1) E3 ubiquitin ligase complex.

It is found in the endoplasmic reticulum. Its subcellular location is the cytoplasm. The protein resides in the cytoskeleton. The protein localises to the cytoplasmic vesicle. It localises to the autophagosome. It is found in the mitochondrion. Its subcellular location is the cytosol. The protein resides in the nucleus. The protein localises to the cell junction. It localises to the focal adhesion. It functions in the pathway protein modification; protein ubiquitination. Substrate-recognition component of a DCX (DDB1-CUL4-X-box) E3 ubiquitin-protein ligase complex involved in cell cycle control and autophagy. The DCX(AMBRA1) complex specifically mediates the polyubiquitination of target proteins. Acts as an upstream master regulator of the transition from G1 to S cell phase: ambra1a specifically recognizes and binds phosphorylated cyclin-D (ccnd1, ccnd2 and ccnd3), leading to cyclin-D ubiquitination by the DCX(AMBRA1) complex and subsequent degradation. Acts as a regulator of Cul5-RING (CRL5) E3 ubiquitin-protein ligase complexes by mediating ubiquitination and degradation of Elongin-C (eloc) component of CRL5 complexes. Acts as a key regulator of autophagy by modulating the BECN1-PIK3C3 complex: controls protein turnover during neuronal development, and regulates normal cell survival and proliferation. In normal conditions, ambra1a is tethered to the cytoskeleton via interaction with dyneins light chains. Upon autophagy induction, ambra1a is released from the cytoskeletal docking site to induce autophagosome nucleation by mediating ubiquitination of proteins involved in autophagy. Also acts as an activator of mitophagy. Required for skeletal muscle development. The sequence is that of Activating molecule in BECN1-regulated autophagy protein 1A from Danio rerio (Zebrafish).